The sequence spans 264 residues: Hydroxyethylthiazole kinase (264 aa).

Methionine 52 is a substrate binding site. Arginine 127 and threonine 173 together coordinate ATP. Glycine 200 contacts substrate.

Belongs to the Thz kinase family. Mg(2+) is required as a cofactor.

It carries out the reaction 5-(2-hydroxyethyl)-4-methylthiazole + ATP = 4-methyl-5-(2-phosphooxyethyl)-thiazole + ADP + H(+). It participates in cofactor biosynthesis; thiamine diphosphate biosynthesis; 4-methyl-5-(2-phosphoethyl)-thiazole from 5-(2-hydroxyethyl)-4-methylthiazole: step 1/1. In terms of biological role, catalyzes the phosphorylation of the hydroxyl group of 4-methyl-5-beta-hydroxyethylthiazole (THZ). In Pectobacterium carotovorum subsp. carotovorum (strain PC1), this protein is Hydroxyethylthiazole kinase.